The following is a 582-amino-acid chain: Pescadillo homolog (582 aa).

The stretch at Leu277–Glu329 forms a coiled coil. Residues Glu294–Glu309 are compositionally biased toward acidic residues. The disordered stretch occupies residues Glu294–Glu317. The region spanning Ala323 to Leu416 is the BRCT domain. Residues Ala445–Gln454 are compositionally biased toward basic and acidic residues. Disordered regions lie at residues Ala445–Ser511 and Arg554–Gln582. A compositionally biased stretch (acidic residues) spans Glu455–Thr477. Residues Glu478–Ala490 are compositionally biased toward basic and acidic residues. A coiled-coil region spans residues Arg517–Gln582. Residues Ala572 to Gln582 are compositionally biased toward basic residues.

The protein belongs to the pescadillo family. In terms of assembly, component of the PeBoW complex, composed of bop1, pes1 and wdr12. The complex is held together by bop1, which interacts with pes1 via its N-terminal domain and with wdr12 via a high-affinity interaction between the seven-bladed beta-propeller domains of the 2 proteins. The PeBoW complex associates with the 66S pre-ribosome.

It localises to the nucleus. Its subcellular location is the nucleolus. It is found in the nucleoplasm. Functionally, component of the PeBoW complex, which is required for maturation of 28S and 5.8S ribosomal RNAs and formation of the 60S ribosome. In Salmo salar (Atlantic salmon), this protein is Pescadillo homolog (pes1).